Consider the following 723-residue polypeptide: Catalase-peroxidase (723 aa).

A cross-link (tryptophyl-tyrosyl-methioninium (Trp-Tyr) (with M-250)) is located at residues 96-224; sequence WHAAGTYRIQ…LAAVQMGLIY (129 aa). The Proton acceptor role is filled by His-97. A cross-link (tryptophyl-tyrosyl-methioninium (Tyr-Met) (with W-96)) is located at residues 224-250; the sequence is YVNPEGVNSQPDPIKTGEQVRVTFARM. His-265 contacts heme b.

It belongs to the peroxidase family. Peroxidase/catalase subfamily. In terms of assembly, homodimer or homotetramer. The cofactor is heme b. Post-translationally, formation of the three residue Trp-Tyr-Met cross-link is important for the catalase, but not the peroxidase activity of the enzyme.

It carries out the reaction H2O2 + AH2 = A + 2 H2O. It catalyses the reaction 2 H2O2 = O2 + 2 H2O. Bifunctional enzyme with both catalase and broad-spectrum peroxidase activity. In Marinobacter nauticus (strain ATCC 700491 / DSM 11845 / VT8) (Marinobacter aquaeolei), this protein is Catalase-peroxidase.